A 526-amino-acid polypeptide reads, in one-letter code: MEYQTLWQRYLDWLYYHQNLGFYVDISRIRFDDAFIDSIKPKFEKAFKDMEELEKGAIANPDEGRMVGHYWLRAPELAPNDEVRKEITEPLKQIEEFVAKVLKGTIKPPTADKFTDIISVGIGGSALGPQFVSEALAGDFPPMGIHFIDNTDPAGIDRVVTRLKDRLKSTLVIVTSKSGGTPETRNGMLEMRHAYEKNGLDFPKYAVAVTMPGSKMDQVAHDWLARFPMQDWVGGRTSELSAVGLLPAALQGIDIQGMLAGAKEMDEATRVKDLKNNPSALLALSWYYAGNGKGEKDMVVLPYKDSLALLSRYLQQLVMESLGKEKDLDGNTVYQGIAVYGNKGSTDQHAYVQQLREGVPNFFVTFIEVLEDRQGSSIELEPGVTSGDYLAGFIQGTRQALYENHRDSITITIPEVNPRTVGALVALYERAVSFYGSLVNVNAYHQPGVEAGKKAAASILELQQNVMKALKEAGTELDLETLSQKAGHPDKVEAVYKIVRHLAANNRGVMLKGDLGKPTTLKVSFG.

E320 functions as the Proton donor in the catalytic mechanism. Active-site residues include H349 and K453.

The protein belongs to the GPI family.

It localises to the cytoplasm. The enzyme catalyses alpha-D-glucose 6-phosphate = beta-D-fructose 6-phosphate. It functions in the pathway carbohydrate biosynthesis; gluconeogenesis. The protein operates within carbohydrate degradation; glycolysis; D-glyceraldehyde 3-phosphate and glycerone phosphate from D-glucose: step 2/4. In terms of biological role, catalyzes the reversible isomerization of glucose-6-phosphate to fructose-6-phosphate. In Gloeothece citriformis (strain PCC 7424) (Cyanothece sp. (strain PCC 7424)), this protein is Glucose-6-phosphate isomerase.